Here is a 102-residue protein sequence, read N- to C-terminus: Cytochrome c3 (102 aa).

Positions 26, 29, 34, 37, 38, 39, 50, 55, 56, 73, 81, 84, 85, 95, 98, and 99 each coordinate heme c.

Heme is required as a cofactor.

It localises to the periplasm. Its function is as follows. Participates in sulfate respiration coupled with phosphorylation by transferring electrons from the enzyme dehydrogenase to ferredoxin. The chain is Cytochrome c3 from Desulfovibrio desulfuricans.